The sequence spans 444 residues: uncharacterized protein (444 aa).

12 helical membrane passes run 2–22 (PILI…KVKL), 24–44 (TFVS…MDIN), 52–72 (TGIG…AMLG), 106–126 (FIIG…PIVY), 134–154 (MPFL…HGFL), 174–194 (VLLF…PLFN), 228–248 (FAIS…ATIF), 261–281 (IIEF…LALY), 305–325 (IAMM…LIDG), 343–363 (LFVA…ATVA), 377–397 (AGSV…VIAC), and 424–444 (LLTT…GLVM).

Belongs to the GntP permease family.

It is found in the cell membrane. This is an uncharacterized protein from Bacillus subtilis (strain 168).